A 455-amino-acid polypeptide reads, in one-letter code: Adenylosuccinate synthetase isozyme 2 (455 aa).

The tract at residues 1 to 25 is disordered; the sequence is MSDSGDAQPQDGGNSSSSRGKSPSV. Low complexity predominate over residues 12–25; that stretch reads GGNSSSSRGKSPSV. GTP-binding positions include 38–44 and 66–68; these read GDEGKGK and GHT. The Proton acceptor role is filled by D39. The Mg(2+) site is built by D39 and G66. A substrate-binding site is contributed by D39. Residues 39–42, 64–67, T161, R175, N254, T269, and R333 contribute to the IMP site; these read DEGK and NAGH. H67 (proton donor) is an active-site residue. 329 to 335 is a binding site for substrate; it reads VTTGRKR. GTP-binding positions include R335, 361–363, and 443–446; these read KLD and GVGK.

This sequence belongs to the adenylosuccinate synthetase family. As to quaternary structure, homodimer. Mg(2+) serves as cofactor.

It is found in the cytoplasm. Its subcellular location is the mitochondrion. The enzyme catalyses IMP + L-aspartate + GTP = N(6)-(1,2-dicarboxyethyl)-AMP + GDP + phosphate + 2 H(+). Its pathway is purine metabolism; AMP biosynthesis via de novo pathway; AMP from IMP: step 1/2. Its activity is regulated as follows. Inhibited competitively by AMP and IMP and non-competitively by fructose 1,6-bisphosphate. In terms of biological role, plays an important role in the de novo pathway and in the salvage pathway of purine nucleotide biosynthesis. Catalyzes the first committed step in the biosynthesis of AMP from IMP. This chain is Adenylosuccinate synthetase isozyme 2 (adss2), found in Danio rerio (Zebrafish).